Here is a 321-residue protein sequence, read N- to C-terminus: Biotin synthase (321 aa).

Residues 37-264 enclose the Radical SAM core domain; sequence RDMELCTLSS…TSVIRLSAGR (228 aa). Positions 52, 56, and 59 each coordinate [4Fe-4S] cluster. Residues cysteine 96, cysteine 127, cysteine 187, and arginine 259 each contribute to the [2Fe-2S] cluster site.

This sequence belongs to the radical SAM superfamily. Biotin synthase family. In terms of assembly, homodimer. Requires [4Fe-4S] cluster as cofactor. [2Fe-2S] cluster is required as a cofactor.

The enzyme catalyses (4R,5S)-dethiobiotin + (sulfur carrier)-SH + 2 reduced [2Fe-2S]-[ferredoxin] + 2 S-adenosyl-L-methionine = (sulfur carrier)-H + biotin + 2 5'-deoxyadenosine + 2 L-methionine + 2 oxidized [2Fe-2S]-[ferredoxin]. It participates in cofactor biosynthesis; biotin biosynthesis; biotin from 7,8-diaminononanoate: step 2/2. Catalyzes the conversion of dethiobiotin (DTB) to biotin by the insertion of a sulfur atom into dethiobiotin via a radical-based mechanism. In Coxiella burnetii (strain CbuK_Q154) (Coxiella burnetii (strain Q154)), this protein is Biotin synthase.